The chain runs to 405 residues: 2,3-diketo-5-methylthiopentyl-1-phosphate enolase (405 aa).

Residue K91 is the Proton acceptor of the active site. Substrate-binding positions include K140, 166–169, H257, G329, and 351–352; these read KDDE and GG. K166, D168, and E169 together coordinate Mg(2+). K166 carries the post-translational modification N6-carboxylysine.

The protein belongs to the RuBisCO large chain family. Type IV subfamily. In terms of assembly, homodimer. Requires Mg(2+) as cofactor.

It catalyses the reaction 5-methylsulfanyl-2,3-dioxopentyl phosphate = 2-hydroxy-5-methylsulfanyl-3-oxopent-1-enyl phosphate. It participates in amino-acid biosynthesis; L-methionine biosynthesis via salvage pathway; L-methionine from S-methyl-5-thio-alpha-D-ribose 1-phosphate: step 3/6. Catalyzes the enolization of 2,3-diketo-5-methylthiopentyl-1-phosphate (DK-MTP-1-P) into 2-hydroxy-3-keto-5-methylthiopentenyl-1-phosphate (HK-MTPenyl-1-P). In Bacillus licheniformis (strain ATCC 14580 / DSM 13 / JCM 2505 / CCUG 7422 / NBRC 12200 / NCIMB 9375 / NCTC 10341 / NRRL NRS-1264 / Gibson 46), this protein is 2,3-diketo-5-methylthiopentyl-1-phosphate enolase.